Consider the following 327-residue polypeptide: Flotillin-like protein FloA (327 aa).

A run of 2 helical transmembrane segments spans residues 6–26 (VLFF…FTFV) and 28–48 (IMLW…TLVG).

It belongs to the flotillin-like FloA family. In terms of assembly, homooligomerizes.

It is found in the cell membrane. The protein localises to the membrane raft. Its function is as follows. Found in functional membrane microdomains (FMM) that may be equivalent to eukaryotic membrane rafts. FMMs are highly dynamic and increase in number as cells age. Flotillins are thought to be important factors in membrane fluidity. The polypeptide is Flotillin-like protein FloA (Priestia megaterium (strain DSM 319 / IMG 1521) (Bacillus megaterium)).